The following is a 365-amino-acid chain: Palmitoyltransferase ZDHHC20 (365 aa).

Topologically, residues 1–14 are cytoplasmic; the sequence is MAPWTLWRCCQRVV. A helical membrane pass occupies residues 15–35; the sequence is GWVPVLFITFVVVWSYYAYVV. The Lumenal segment spans residues 36–53; the sequence is ELCVFTIFGNEENGKTVV. The chain crosses the membrane as a helical span at residues 54–74; the sequence is YLVAFHLFFVMFVWSYWMTIF. Residues 75-169 are Cytoplasmic-facing; it reads TSPASPSKEF…NNCVGFSNYK (95 aa). A DHHC domain is found at 126–176; sequence RYCEKCQLIKPDRAHHCSACDSCILKMDHHCPWVNNCVGFSNYKFFLLFLL. Cys-128 and Cys-131 together coordinate Zn(2+). Substrate is bound by residues Lys-135 and 140 to 143; that span reads HHCS. Zn(2+) contacts are provided by His-141, Cys-142, Cys-145, Cys-148, and His-155. Cys-156 serves as the catalytic S-palmitoyl cysteine intermediate. A Zn(2+)-binding site is contributed by Cys-162. Residues 170-190 traverse the membrane as a helical segment; that stretch reads FFLLFLLYSLLYCLFVAATVL. Over 191 to 207 the chain is Lumenal; it reads EYFIKFWTNELTDTRAK. A helical transmembrane segment spans residues 208 to 231; it reads FHVLFLFFVSAMFFISVLSLFSYH. At 232-365 the chain is on the cytoplasmic side; the sequence is CWLVGKNRTT…NNHVTVAIEN (134 aa). Phosphoserine occurs at positions 305, 330, and 339.

The protein belongs to the DHHC palmitoyltransferase family. Autopalmitoylated (in vitro).

It localises to the golgi apparatus membrane. It is found in the cell membrane. Its subcellular location is the cytoplasm. The protein resides in the perinuclear region. The protein localises to the endoplasmic reticulum membrane. It localises to the endoplasmic reticulum-Golgi intermediate compartment membrane. It catalyses the reaction L-cysteinyl-[protein] + hexadecanoyl-CoA = S-hexadecanoyl-L-cysteinyl-[protein] + CoA. The enzyme catalyses L-cysteinyl-[protein] + tetradecanoyl-CoA = S-tetradecanoyl-L-cysteinyl-[protein] + CoA. It carries out the reaction L-cysteinyl-[protein] + octadecanoyl-CoA = S-octadecanoyl-L-cysteinyl-[protein] + CoA. Palmitoyltransferase that could catalyze the addition of palmitate onto various protein substrates. Catalyzes palmitoylation of Cys residues in the cytoplasmic C-terminus of EGFR, and modulates the duration of EGFR signaling by modulating palmitoylation-dependent EGFR internalization and degradation. Has a preference for acyl-CoA with C16 fatty acid chains. Can also utilize acyl-CoA with C14 and C18 fatty acid chains. May palmitoylate CALHM1 subunit of gustatory voltage-gated ion channels and modulate channel gating and kinetics. In terms of biological role, (Microbial infection) Dominant palmitoyltransferase responsible for lipidation of SARS coronavirus-2/SARS-CoV-2 spike protein. Through a sequential action with ZDHHC9, rapidly and efficiently palmitoylates spike protein following its synthesis in the endoplasmic reticulum (ER). In the infected cell, promotes spike biogenesis by protecting it from premature ER degradation, increases half-life and controls the lipid organization of its immediate membrane environment. Once the virus has formed, spike palmitoylation controls fusion with the target cell. The sequence is that of Palmitoyltransferase ZDHHC20 from Homo sapiens (Human).